The primary structure comprises 63 residues: MSRICEICGKGPSFGNNVSHANNKTSKIWRPNLQKIKAVKNGTVRSIKVCTRCIRSGHVTKAL.

This sequence belongs to the bacterial ribosomal protein bL28 family.

The protein is Large ribosomal subunit protein bL28 of Citrifermentans bemidjiense (strain ATCC BAA-1014 / DSM 16622 / JCM 12645 / Bem) (Geobacter bemidjiensis).